We begin with the raw amino-acid sequence, 329 residues long: Phosphate acyltransferase (329 aa).

Belongs to the PlsX family. Homodimer. Probably interacts with PlsY.

The protein resides in the cytoplasm. It catalyses the reaction a fatty acyl-[ACP] + phosphate = an acyl phosphate + holo-[ACP]. It participates in lipid metabolism; phospholipid metabolism. Functionally, catalyzes the reversible formation of acyl-phosphate (acyl-PO(4)) from acyl-[acyl-carrier-protein] (acyl-ACP). This enzyme utilizes acyl-ACP as fatty acyl donor, but not acyl-CoA. This is Phosphate acyltransferase from Geobacillus sp. (strain WCH70).